The primary structure comprises 386 residues: Outer membrane protein assembly factor BamB (386 aa).

The N-terminal stretch at Met1–Gly20 is a signal peptide. The N-palmitoyl cysteine moiety is linked to residue Cys21. A lipid anchor (S-diacylglycerol cysteine) is attached at Cys21.

The protein belongs to the BamB family. Part of the Bam complex.

The protein localises to the cell outer membrane. Functionally, part of the outer membrane protein assembly complex, which is involved in assembly and insertion of beta-barrel proteins into the outer membrane. The polypeptide is Outer membrane protein assembly factor BamB (Vibrio cholerae serotype O1 (strain ATCC 39315 / El Tor Inaba N16961)).